Reading from the N-terminus, the 554-residue chain is CTP synthase (554 aa).

The amidoligase domain stretch occupies residues 1 to 265 (MTPLIFVTGG…DELVIEQFKL (265 aa)). S13 is a binding site for CTP. A UTP-binding site is contributed by S13. ATP is bound by residues 14 to 19 (SLGKGI) and D71. Mg(2+) contacts are provided by D71 and E139. Residues 146–148 (DIE), 186–191 (KTKPTQ), and K222 contribute to the CTP site. Residues 186-191 (KTKPTQ) and K222 each bind UTP. In terms of domain architecture, Glutamine amidotransferase type-1 spans 292 to 545 (NIAVVGKYVD…VRAAREKKAG (254 aa)). Position 353 (G353) interacts with L-glutamine. Residue C380 is the Nucleophile; for glutamine hydrolysis of the active site. Residues 381–384 (YGMQ), E404, and R471 each bind L-glutamine. Catalysis depends on residues H518 and E520.

The protein belongs to the CTP synthase family. In terms of assembly, homotetramer.

The catalysed reaction is UTP + L-glutamine + ATP + H2O = CTP + L-glutamate + ADP + phosphate + 2 H(+). It catalyses the reaction L-glutamine + H2O = L-glutamate + NH4(+). The enzyme catalyses UTP + NH4(+) + ATP = CTP + ADP + phosphate + 2 H(+). It participates in pyrimidine metabolism; CTP biosynthesis via de novo pathway; CTP from UDP: step 2/2. Its activity is regulated as follows. Allosterically activated by GTP, when glutamine is the substrate; GTP has no effect on the reaction when ammonia is the substrate. The allosteric effector GTP functions by stabilizing the protein conformation that binds the tetrahedral intermediate(s) formed during glutamine hydrolysis. Inhibited by the product CTP, via allosteric rather than competitive inhibition. Its function is as follows. Catalyzes the ATP-dependent amination of UTP to CTP with either L-glutamine or ammonia as the source of nitrogen. Regulates intracellular CTP levels through interactions with the four ribonucleotide triphosphates. The polypeptide is CTP synthase (Xanthomonas euvesicatoria pv. vesicatoria (strain 85-10) (Xanthomonas campestris pv. vesicatoria)).